Here is a 1594-residue protein sequence, read N- to C-terminus: Mucin-like protein (1594 aa).

The Extracellular portion of the chain corresponds to 1–1530; that stretch reads DTTAGPDTTS…YETREDGLEM (1530 aa). TSP type-1 domains follow at residues 141 to 196, 198 to 253, and 255 to 310; these read DGGF…GSCP, DGNF…PPCP, and DGNF…GPCP. 9 cysteine pairs are disulfide-bonded: cysteine 153–cysteine 190, cysteine 157–cysteine 195, cysteine 168–cysteine 180, cysteine 210–cysteine 247, cysteine 214–cysteine 252, cysteine 225–cysteine 237, cysteine 267–cysteine 304, cysteine 271–cysteine 309, and cysteine 282–cysteine 294. Residues 400–566 enclose the NIDO domain; the sequence is LTISDDAFEQ…GVWFFRLEMN (167 aa). In terms of domain architecture, AMOP spans 568-706; it reads ILSLAGKKCN…RSCFGYTLRR (139 aa). Residues 706 to 901 form the VWFD domain; it reads RRGLIFGDPH…KWQINASQSL (196 aa). 2 consecutive EGF-like domains span residues 1063-1108 and 1110-1156; these read LILL…QYCQ and KIDA…SICE. Intrachain disulfides connect cysteine 1067–cysteine 1075, cysteine 1069–cysteine 1096, cysteine 1098–cysteine 1107, cysteine 1114–cysteine 1127, cysteine 1121–cysteine 1141, cysteine 1144–cysteine 1155, cysteine 1161–cysteine 1173, cysteine 1169–cysteine 1182, cysteine 1285–cysteine 1296, cysteine 1292–cysteine 1305, cysteine 1307–cysteine 1320, cysteine 1326–cysteine 1341, cysteine 1334–cysteine 1350, and cysteine 1352–cysteine 1363. Positions 1157-1191 constitute an EGF-like 3; calcium-binding domain; sequence DIDECSDANVSKCDHSCINLPGSYVCDCNQGFSLE. Residues 1281–1321 enclose the EGF-like 4; calcium-binding domain; that stretch reads DINECTTHRHKCSQICHNLDGSYTCSCQPGFNLSPDQTTCE. The EGF-like 5; calcium-binding domain occupies 1322-1364; that stretch reads DIDECGLINEAHCEGSLEICINTMGSFRCECQDGFHRVNDTCQ. The helical transmembrane segment at 1531–1551 threads the bilayer; sequence IWLLVGVSVAVAVPLMIVIVI. Topologically, residues 1552–1593 are cytoplasmic; the sequence is LYREYRRIAKQRRKTNNFDLRQWSGARERTIYSGFTNSKSAR.

Component of the acid-insoluble and acid-soluble organic matrix of the aragonitic skeleton (at protein level).

Its subcellular location is the membrane. In Acropora millepora (Staghorn coral), this protein is Mucin-like protein.